The following is a 494-amino-acid chain: Glutamyl-tRNA(Gln) amidotransferase subunit A (494 aa).

Active-site charge relay system residues include Lys81 and Ser156. Ser180 (acyl-ester intermediate) is an active-site residue.

Belongs to the amidase family. GatA subfamily. Heterotrimer of A, B and C subunits.

The catalysed reaction is L-glutamyl-tRNA(Gln) + L-glutamine + ATP + H2O = L-glutaminyl-tRNA(Gln) + L-glutamate + ADP + phosphate + H(+). Functionally, allows the formation of correctly charged Gln-tRNA(Gln) through the transamidation of misacylated Glu-tRNA(Gln) in organisms which lack glutaminyl-tRNA synthetase. The reaction takes place in the presence of glutamine and ATP through an activated gamma-phospho-Glu-tRNA(Gln). This chain is Glutamyl-tRNA(Gln) amidotransferase subunit A, found in Mycobacterium bovis (strain ATCC BAA-935 / AF2122/97).